We begin with the raw amino-acid sequence, 335 residues long: Transmembrane protein 120B-B (335 aa).

Residues 1–39 (MSLQKCQEEWGELEKEFQQLQETHKVYKQKLEELSSLQN) adopt a coiled-coil conformation. 6 helical membrane passes run 100-116 (SLYLNLVLGNVNVTLLS), 130-150 (FKLYLTIILLLGAITCRFVLH), 157-177 (VFNFLLVWYFCTLTIRESILI), 193-213 (VSTFLSGVMLTWPDGLMYQMF), 268-288 (FLLPVLFFGHFWQLYNAMTLF), and 300-320 (QVFVLALTFLLLFLGNFLTTL).

Belongs to the TMEM120 family.

Its subcellular location is the nucleus inner membrane. In terms of biological role, necessary for efficient adipogenesis. Does not show ion channel activity. This chain is Transmembrane protein 120B-B (tmem120b-b), found in Xenopus laevis (African clawed frog).